The chain runs to 359 residues: Nicotinate-nucleotide--dimethylbenzimidazole phosphoribosyltransferase (359 aa).

Catalysis depends on E318, which acts as the Proton acceptor.

This sequence belongs to the CobT family. In terms of assembly, homodimer.

The catalysed reaction is 5,6-dimethylbenzimidazole + nicotinate beta-D-ribonucleotide = alpha-ribazole 5'-phosphate + nicotinate + H(+). Its pathway is nucleoside biosynthesis; alpha-ribazole biosynthesis; alpha-ribazole from 5,6-dimethylbenzimidazole: step 1/2. Catalyzes the synthesis of alpha-ribazole-5'-phosphate from nicotinate mononucleotide (NAMN) and 5,6-dimethylbenzimidazole (DMB). In Escherichia coli O81 (strain ED1a), this protein is Nicotinate-nucleotide--dimethylbenzimidazole phosphoribosyltransferase.